The primary structure comprises 442 residues: Septin-8 (442 aa).

N-acetylalanine is present on Ala2. Ser10 is modified (phosphoserine). Residues 41 to 307 (QGFSFNILCV…ELYRRCKLEE (267 aa)) enclose the Septin-type G domain. A G1 motif region spans residues 51 to 58 (GETGIGKS). Residues 51–58 (GETGIGKS), Gly106, 187–195 (KADTISKSE), Gly241, and Arg256 each bind GTP. The interval 103-106 (DAVG) is G3 motif. Residues 186 to 189 (AKAD) are G4 motif. Residues 322 to 410 (LQETYEAKRK…RKAAVEALQS (89 aa)) adopt a coiled-coil conformation. The segment covering 377-391 (HQEEKRKVEEKRREL) has biased composition (basic and acidic residues). The interval 377 to 442 (HQEEKRKVEE…WSSIYSVTIP (66 aa)) is disordered. 2 stretches are compositionally biased toward polar residues: residues 408–420 (LQSQALHATSQQP) and 432–442 (GWSSIYSVTIP).

It belongs to the TRAFAC class TrmE-Era-EngA-EngB-Septin-like GTPase superfamily. Septin GTPase family. Septins polymerize into heterooligomeric protein complexes that form filaments, and can associate with cellular membranes, actin filaments and microtubules. GTPase activity is required for filament formation. Interacts with CDK14, SEPTIN4, SEPTIN5 and SEPTIN7. Interacts with VAMP2; the interaction inhibits interaction of VAMP2 with SYP. Interacts with STX1A.

It is found in the cytoplasm. Its subcellular location is the cytoskeleton. The protein resides in the synapse. It localises to the cell projection. The protein localises to the axon. It is found in the cytoplasmic vesicle. Its subcellular location is the secretory vesicle. The protein resides in the synaptic vesicle membrane. It localises to the presynapse. Functionally, filament-forming cytoskeletal GTPase. May play a role in platelet secretion. Seems to participate in the process of SNARE complex formation in synaptic vesicles. The sequence is that of Septin-8 from Callithrix jacchus (White-tufted-ear marmoset).